Here is a 185-residue protein sequence, read N- to C-terminus: Ribonuclease HII (185 aa).

The RNase H type-2 domain maps to 1-185; sequence MIILGIDEAG…KSYKPIQLLL (185 aa). Residues D7, E8, and D99 each coordinate a divalent metal cation.

The protein belongs to the RNase HII family. The cofactor is Mn(2+). Mg(2+) is required as a cofactor.

Its subcellular location is the cytoplasm. It carries out the reaction Endonucleolytic cleavage to 5'-phosphomonoester.. Its function is as follows. Endonuclease that specifically degrades the RNA of RNA-DNA hybrids. This chain is Ribonuclease HII, found in Francisella tularensis subsp. novicida (strain U112).